The following is a 171-amino-acid chain: Adenine phosphoribosyltransferase (171 aa).

Belongs to the purine/pyrimidine phosphoribosyltransferase family. In terms of assembly, homodimer.

It localises to the cytoplasm. It carries out the reaction AMP + diphosphate = 5-phospho-alpha-D-ribose 1-diphosphate + adenine. It participates in purine metabolism; AMP biosynthesis via salvage pathway; AMP from adenine: step 1/1. Catalyzes a salvage reaction resulting in the formation of AMP, that is energically less costly than de novo synthesis. The polypeptide is Adenine phosphoribosyltransferase (Mycoplasmopsis fermentans (strain ATCC 19989 / NBRC 14854 / NCTC 10117 / PG18) (Mycoplasma fermentans)).